Reading from the N-terminus, the 394-residue chain is AEINLVRRRVNNLEEEVTRIKKDNLYLVNELNKARSDLDQETLNRIDFQNQLQTLLEEIDFMRRVHDQEITELQAMAARDTTPENREYFKNELSSAIRDIRAEYDQICNINRTDMESWYKLKVQEIQTQSTRQNLEQGYAKEEVKRLRVQLSELRGKLADLEGRNSLLEKQTQELNYQLEDDQRSYEAALNDRDAQIRKMREECQALMMELQMLLDTKQTLDAEIAIYRKMLEGEENRAGLRQLVEQVVKTHSLTEIGETESIRVLKGETASRTSFQRSAKGNVSIQDAASDGKYILSENTHRSKEEPIGEWRLKRKIDGKREIVYTFPTNFVLKPGKSVKIWARGQGVYSPPDQLVFDAEDSFGIGSNVQTILFNKEGEERASHIQRSSHTIN.

A coil 1B region spans residues 1–73 (AEINLVRRRV…RVHDQEITEL (73 aa)). An IF rod domain is found at 1–239 (AEINLVRRRV…KMLEGEENRA (239 aa)). Residues 74–91 (QAMAARDTTPENREYFKN) are linker 12. The tract at residues 92–239 (ELSSAIRDIR…KMLEGEENRA (148 aa)) is coil 2. Positions 240–394 (GLRQLVEQVV…HIQRSSHTIN (155 aa)) are tail. One can recognise an LTD domain in the interval 272-389 (SRTSFQRSAK…EERASHIQRS (118 aa)).

Belongs to the intermediate filament family.

The protein is Muscle cell intermediate filament protein AV71 (AV71) of Acanthocheilonema viteae (Filarial nematode worm).